The sequence spans 80 residues: Small pacifastin protease inhibitor (80 aa).

The signal sequence occupies residues 1-24 (MSKVLKVGLLLLLVAVAASAYAVA). Positions 25 to 47 (EENGAPKENKQLPQIDDYGVTNK) are excised as a propeptide. The Pacifastin domain occupies 45–80 (TNKCPANQPFKWNCNYCTCGPEGKDASCTRMACPQH). Disulfide bonds link cysteine 48/cysteine 63, cysteine 58/cysteine 77, and cysteine 61/cysteine 72.

Belongs to the protease inhibitor I19 family. As to expression, expressed in the venom apparatus. Low transcript levels are also detected in other tissues.

The protein localises to the secreted. Its function is as follows. Parasitic wasp protein that may interfere with the host immune response. The recombinant protein inhibits trypsin activity and prophenoloxidase (PPO) activation, an enzyme essential for both clotting and insect innate immune responses. It does not inhibit activity of chymotrypsin and protease K, and has no effect on phenoloxidase (PO) activity. The polypeptide is Small pacifastin protease inhibitor (Nasonia vitripennis (Parasitic wasp)).